The sequence spans 495 residues: Glycerol kinase (495 aa).

ADP is bound at residue T12. ATP is bound by residues T12, T13, and S14. T12 serves as a coordination point for sn-glycerol 3-phosphate. R16 is an ADP binding site. R82, E83, Y134, and D243 together coordinate sn-glycerol 3-phosphate. The glycerol site is built by R82, E83, Y134, D243, and Q244. T265 and G308 together coordinate ADP. ATP-binding residues include T265, G308, Q312, and G409. The ADP site is built by G409 and N413.

The protein belongs to the FGGY kinase family.

It catalyses the reaction glycerol + ATP = sn-glycerol 3-phosphate + ADP + H(+). Its pathway is polyol metabolism; glycerol degradation via glycerol kinase pathway; sn-glycerol 3-phosphate from glycerol: step 1/1. Inhibited by fructose 1,6-bisphosphate (FBP). Key enzyme in the regulation of glycerol uptake and metabolism. Catalyzes the phosphorylation of glycerol to yield sn-glycerol 3-phosphate. The chain is Glycerol kinase from Ectopseudomonas mendocina (strain ymp) (Pseudomonas mendocina).